The primary structure comprises 161 residues: GTP-dependent dephospho-CoA kinase (161 aa).

Residues Asp-40, Val-41, Val-42, Asp-59, and Glu-112 each contribute to the GTP site.

The protein belongs to the GTP-dependent DPCK family.

The catalysed reaction is 3'-dephospho-CoA + GTP = GDP + CoA + H(+). The protein operates within cofactor biosynthesis; coenzyme A biosynthesis. In terms of biological role, catalyzes the GTP-dependent phosphorylation of the 3'-hydroxyl group of dephosphocoenzyme A to form coenzyme A (CoA). The protein is GTP-dependent dephospho-CoA kinase of Methanoculleus marisnigri (strain ATCC 35101 / DSM 1498 / JR1).